The sequence spans 199 residues: NADH-quinone oxidoreductase subunit C (199 aa).

The protein belongs to the complex I 30 kDa subunit family. In terms of assembly, NDH-1 is composed of 14 different subunits. Subunits NuoB, C, D, E, F, and G constitute the peripheral sector of the complex.

It is found in the cell inner membrane. The catalysed reaction is a quinone + NADH + 5 H(+)(in) = a quinol + NAD(+) + 4 H(+)(out). In terms of biological role, NDH-1 shuttles electrons from NADH, via FMN and iron-sulfur (Fe-S) centers, to quinones in the respiratory chain. The immediate electron acceptor for the enzyme in this species is believed to be ubiquinone. Couples the redox reaction to proton translocation (for every two electrons transferred, four hydrogen ions are translocated across the cytoplasmic membrane), and thus conserves the redox energy in a proton gradient. The protein is NADH-quinone oxidoreductase subunit C of Roseobacter denitrificans (strain ATCC 33942 / OCh 114) (Erythrobacter sp. (strain OCh 114)).